Here is a 255-residue protein sequence, read N- to C-terminus: 3-deoxy-manno-octulosonate cytidylyltransferase (255 aa).

It belongs to the KdsB family.

Its subcellular location is the cytoplasm. The catalysed reaction is 3-deoxy-alpha-D-manno-oct-2-ulosonate + CTP = CMP-3-deoxy-beta-D-manno-octulosonate + diphosphate. It functions in the pathway nucleotide-sugar biosynthesis; CMP-3-deoxy-D-manno-octulosonate biosynthesis; CMP-3-deoxy-D-manno-octulosonate from 3-deoxy-D-manno-octulosonate and CTP: step 1/1. Its pathway is bacterial outer membrane biogenesis; lipopolysaccharide biosynthesis. Its function is as follows. Activates KDO (a required 8-carbon sugar) for incorporation into bacterial lipopolysaccharide in Gram-negative bacteria. The chain is 3-deoxy-manno-octulosonate cytidylyltransferase from Psychromonas ingrahamii (strain DSM 17664 / CCUG 51855 / 37).